Reading from the N-terminus, the 66-residue chain is Large ribosomal subunit protein bL35 (66 aa).

This sequence belongs to the bacterial ribosomal protein bL35 family.

The sequence is that of Large ribosomal subunit protein bL35 from Cereibacter sphaeroides (strain ATCC 17029 / ATH 2.4.9) (Rhodobacter sphaeroides).